Consider the following 661-residue polypeptide: NUAK family SNF1-like kinase 1 (661 aa).

An N-acetylmethionine modification is found at M1. The disordered stretch occupies residues 1–24; the sequence is MEGAAAPVAGDRPDLGLGAPGSPR. S22 bears the Phosphoserine mark. The Protein kinase domain occupies 55-306; the sequence is YELQETLGKG…IEDIANHWWV (252 aa). ATP-binding positions include 61–69 and K84; that span reads LGKGTYGKV. D178 serves as the catalytic Proton acceptor. Residue T211 is modified to Phosphothreonine; by LKB1. Disordered stretches follow at residues 345–421 and 442–570; these read TEAK…EGVV and LPSS…RPSS. Basic residues predominate over residues 393–404; it reads SSKRPKGILKKR. Residues 399 to 402 carry the GILK motif motif; the sequence is GILK. Phosphoserine is present on S455. Basic residues predominate over residues 518–529; it reads SCRRKGILKHSS. S600 carries the post-translational modification Phosphoserine; by PKB/AKT1.

Belongs to the protein kinase superfamily. CAMK Ser/Thr protein kinase family. SNF1 subfamily. Interacts (via GILK motif) with PPP1CB; the interaction is direct and bridges NUAK1 and PPP1R12A. Interacts with CDKN1A. The cofactor is Mg(2+). In terms of processing, ubiquitinated with 'Lys-29'- and 'Lys-33'-linked polyubiquitins which appear to impede LKB1-mediated phosphorylation. Deubiquitinated by USP9X. Phosphorylated at Thr-211 by STK11/LKB1 in complex with STE20-related adapter-alpha (STRADA) pseudo kinase and CAB39. Not dephosphorylated by the myosin PP1 complex when regulating its activity, due to the presence of PPP1R12A, which prevents myosin PP1 from dephosphorylating NUAK1. Phosphorylated by STK38L upon stimulation with IGF1. In terms of tissue distribution, expressed at high levels in heart and brain, and at lower levels in skeletal muscle, kidney, ovary, placenta, lung and liver. Highly up-regulated in colorectal cancer cell lines.

It is found in the nucleus. It localises to the cytoplasm. The catalysed reaction is L-seryl-[protein] + ATP = O-phospho-L-seryl-[protein] + ADP + H(+). It catalyses the reaction L-threonyl-[protein] + ATP = O-phospho-L-threonyl-[protein] + ADP + H(+). Activated by phosphorylation on Thr-211. Activated by phosphorylation at Ser-600 AKT1 during glucose starvation; the relevance of such activation in normal cells is however unsure. In terms of biological role, serine/threonine-protein kinase involved in various processes such as cell adhesion, regulation of cell ploidy and senescence, cell proliferation and tumor progression. Phosphorylates ATM, CASP6, LATS1, PPP1R12A and p53/TP53. Acts as a regulator of cellular senescence and cellular ploidy by mediating phosphorylation of 'Ser-464' of LATS1, thereby controlling its stability. Controls cell adhesion by regulating activity of the myosin protein phosphatase 1 (PP1) complex. Acts by mediating phosphorylation of PPP1R12A subunit of myosin PP1: phosphorylated PPP1R12A then interacts with 14-3-3, leading to reduced dephosphorylation of myosin MLC2 by myosin PP1. May be involved in DNA damage response: phosphorylates p53/TP53 at 'Ser-15' and 'Ser-392' and is recruited to the CDKN1A/WAF1 promoter to participate in transcription activation by p53/TP53. May also act as a tumor malignancy-associated factor by promoting tumor invasion and metastasis under regulation and phosphorylation by AKT1. Suppresses Fas-induced apoptosis by mediating phosphorylation of CASP6, thereby suppressing the activation of the caspase and the subsequent cleavage of CFLAR. Regulates UV radiation-induced DNA damage response mediated by CDKN1A. In association with STK11, phosphorylates CDKN1A in response to UV radiation and contributes to its degradation which is necessary for optimal DNA repair. In Homo sapiens (Human), this protein is NUAK family SNF1-like kinase 1 (NUAK1).